The primary structure comprises 115 residues: MKYKLNVLLAEIALIGTGNHCHEEANCIAEWLHLKGEEEAVQLIQLSSLMNRGDYASALQQGNKSTYPDLEPWLALCEYRLGLGNALESRLNRLATSQDPRIQTFVNGMKEQLKT.

This sequence belongs to the YscG family. In terms of assembly, component of the heterodimeric YscE-YscG chaperone. The YscE-YscG chaperone forms a stable ternary complex with YscF/SctF.

It localises to the cytoplasm. Chaperone of the type III secretion system (T3SS), also called injectisome, which is used to inject bacterial effector proteins into eukaryotic host cells. Along with YscE, prevents premature polymerization of the YscF/SctF needle protein within the cytoplasm. Required for Yop secretion. The chain is Type 3 secretion system chaperone YscG from Yersinia enterocolitica.